A 208-amino-acid chain; its full sequence is Small ribosomal subunit protein eS8 (208 aa).

A disordered region spans residues 1–37; that stretch reads MGISRDNWHKRRKTGGKRKPYHKKRKYEPGRPAANTK. The span at 8-26 shows a compositional bias: basic residues; it reads WHKRRKTGGKRKPYHKKRK.

Belongs to the eukaryotic ribosomal protein eS8 family. In terms of assembly, component of the small ribosomal subunit. Identified in a IGF2BP1-dependent mRNP granule complex containing untranslated mRNAs. Part of the small subunit (SSU) processome, composed of more than 70 proteins and the RNA chaperone small nucleolar RNA (snoRNA) U3.

It is found in the cytoplasm. Its subcellular location is the membrane. The protein resides in the nucleus. It localises to the nucleolus. Component of the small ribosomal subunit. The ribosome is a large ribonucleoprotein complex responsible for the synthesis of proteins in the cell. Part of the small subunit (SSU) processome, first precursor of the small eukaryotic ribosomal subunit. During the assembly of the SSU processome in the nucleolus, many ribosome biogenesis factors, an RNA chaperone and ribosomal proteins associate with the nascent pre-rRNA and work in concert to generate RNA folding, modifications, rearrangements and cleavage as well as targeted degradation of pre-ribosomal RNA by the RNA exosome. The chain is Small ribosomal subunit protein eS8 (rps8) from Xenopus laevis (African clawed frog).